A 242-amino-acid polypeptide reads, in one-letter code: Ribonuclease PH (242 aa).

Phosphate contacts are provided by residues Arg-86 and 124–126 (GTR).

It belongs to the RNase PH family. As to quaternary structure, homohexameric ring arranged as a trimer of dimers.

It catalyses the reaction tRNA(n+1) + phosphate = tRNA(n) + a ribonucleoside 5'-diphosphate. Phosphorolytic 3'-5' exoribonuclease that plays an important role in tRNA 3'-end maturation. Removes nucleotide residues following the 3'-CCA terminus of tRNAs; can also add nucleotides to the ends of RNA molecules by using nucleoside diphosphates as substrates, but this may not be physiologically important. Probably plays a role in initiation of 16S rRNA degradation (leading to ribosome degradation) during starvation. This Bacillus pumilus (strain SAFR-032) protein is Ribonuclease PH.